Here is a 453-residue protein sequence, read N- to C-terminus: Cyclic GMP-AMP phosphodiesterase SMPDL3A (453 aa).

A signal peptide spans 1–22 (MALVRALVCCLLTAWHCRSGLG). Zn(2+)-binding residues include aspartate 45 and histidine 47. Cysteine 62 and cysteine 81 are joined by a disulfide. A glycan (N-linked (GlcNAc...) asparagine) is linked at asparagine 69. Aspartate 110 is a Zn(2+) binding site. An ATP-binding site is contributed by histidine 114. N-linked (GlcNAc...) asparagine glycosylation is present at asparagine 131. Asparagine 151 serves as a coordination point for Zn(2+). The ATP site is built by asparagine 151 and histidine 152. Residues asparagine 222 and asparagine 238 are each glycosylated (N-linked (GlcNAc...) asparagine). Histidine 252 provides a ligand contact to Zn(2+). N-linked (GlcNAc...) asparagine glycosylation occurs at asparagine 263. Residues histidine 293 and histidine 295 each coordinate Zn(2+). The N-linked (GlcNAc...) asparagine glycan is linked to asparagine 356. 2 cysteine pairs are disulfide-bonded: cysteine 420–cysteine 424 and cysteine 430–cysteine 443. Asparagine 437 carries an N-linked (GlcNAc...) asparagine glycan.

This sequence belongs to the acid sphingomyelinase family. In terms of assembly, monomer. Homodimer; homodimerizes following 2',3'-cGAMP-binding. Zn(2+) is required as a cofactor. N-glycosylation is required for protein maturation, secretion and phosphodiesterase activity. As to expression, detected in blood serum. Detected in macrophages (at protein level).

Its subcellular location is the secreted. It catalyses the reaction 2',3'-cGAMP + H2O = 5'-pGpA(2'-5') + H(+). The catalysed reaction is 5'-pGpA(2'-5') + H2O = 5'-GpA(2'-5') + phosphate. The enzyme catalyses a ribonucleoside 5'-triphosphate + H2O = a ribonucleoside 5'-diphosphate + phosphate + H(+). It carries out the reaction ATP + H2O = ADP + phosphate + H(+). Requires micromolar levels of Zn(2+) for activity. Inhibited by millimolar levels of Zn(2+). Its function is as follows. Cyclic-nucleotide phosphodiesterase that acts as a negative regulator of innate immunity by mediating degradation of 2',3'-cGAMP, thereby inhibiting the cGAS-STING signaling. Specifically linearizes 2',3'-cGAMP into 2'5'-bond pGpA and further hydrolyzes pGpA to produce GpA. Also has in vitro nucleotide phosphodiesterase activity with nucleoside triphosphates, such as ATP. Has in vitro activity with p-nitrophenyl-TMP. Has lower activity with nucleoside diphosphates, and no activity with nucleoside monophosphates. Has in vitro activity with CDP-choline, giving rise to CMP and phosphocholine. Has in vitro activity with CDP-ethanolamine. Does not have sphingomyelin phosphodiesterase activity. The polypeptide is Cyclic GMP-AMP phosphodiesterase SMPDL3A (Homo sapiens (Human)).